A 167-amino-acid chain; its full sequence is NADH-quinone oxidoreductase subunit B (167 aa).

Cys-40, Cys-41, Cys-105, and Cys-134 together coordinate [4Fe-4S] cluster.

This sequence belongs to the complex I 20 kDa subunit family. NDH-1 is composed of 14 different subunits. Subunits NuoB, C, D, E, F, and G constitute the peripheral sector of the complex. It depends on [4Fe-4S] cluster as a cofactor.

It localises to the cell inner membrane. It catalyses the reaction a quinone + NADH + 5 H(+)(in) = a quinol + NAD(+) + 4 H(+)(out). Its function is as follows. NDH-1 shuttles electrons from NADH, via FMN and iron-sulfur (Fe-S) centers, to quinones in the respiratory chain. The immediate electron acceptor for the enzyme in this species is believed to be ubiquinone. Couples the redox reaction to proton translocation (for every two electrons transferred, four hydrogen ions are translocated across the cytoplasmic membrane), and thus conserves the redox energy in a proton gradient. This is NADH-quinone oxidoreductase subunit B from Campylobacter jejuni (strain RM1221).